The sequence spans 339 residues: Dihydroorotase (339 aa).

The Zn(2+) site is built by histidine 12 and histidine 14. Substrate is bound by residues 14 to 16 and asparagine 40; that span reads HVR. Positions 94, 133, 167, and 239 each coordinate Zn(2+). Residue lysine 94 is modified to N6-carboxylysine. Residue histidine 133 participates in substrate binding. Aspartate 239 is an active-site residue. Substrate is bound by residues histidine 243 and alanine 255.

The protein belongs to the metallo-dependent hydrolases superfamily. DHOase family. Class II DHOase subfamily. In terms of assembly, homodimer. It depends on Zn(2+) as a cofactor.

The catalysed reaction is (S)-dihydroorotate + H2O = N-carbamoyl-L-aspartate + H(+). It participates in pyrimidine metabolism; UMP biosynthesis via de novo pathway; (S)-dihydroorotate from bicarbonate: step 3/3. Its function is as follows. Catalyzes the reversible cyclization of carbamoyl aspartate to dihydroorotate. This Helicobacter pylori (strain HPAG1) protein is Dihydroorotase.